Reading from the N-terminus, the 130-residue chain is Small ribosomal subunit protein uS11c (130 aa).

It belongs to the universal ribosomal protein uS11 family. Part of the 30S ribosomal subunit.

The protein resides in the plastid. It localises to the chloroplast. The sequence is that of Small ribosomal subunit protein uS11c from Adiantum capillus-veneris (Maidenhair fern).